The primary structure comprises 530 residues: MARKALKLASWTSMALAASGIYFYSNKYLDPNDFGAVRVGRAVATTAVISYDYLTSLKSVPYGSEEYLQLRSKSWPVFLQVHLRSARRLCELCCANRGTFIKVGQHLGALDYLLPEEYTSTLKVLHSQAPQSSMQEIRQVIREDLGKEIHDLFQSFDDTPLGTASLAQVHKAVLHDGRTVAVKVQHPKVRAQSSKDILLMEVLVLAVKQLFPEFEFMWLVDEAKKNLPLELDFLNEGRNAEKVSQMLRHFDFLKVPRIHWDLSTERVLLMEFVDGGQVNDRDYMERNKIDVNEISRHLGKMYSEMIFVNGFVHCDPHPGNVLVRKHPGTGKAEIVLLDHGLYQMLTEEFRLNYCHLWQSLIWTDMKRVKEYSQRLGAGDLYPLFACMLTARSWDSVNRGISQAPVTATEDLEIRNNAANYLPQISHLLNHVPRQMLLILKTNDLLRGIEAALGTRASASSFLNMSRCCIRALAEHKKKNTCSFFRRTQISFSEAFNLWQINLHELILRVKGLKLADRVLALICWLFPAPL.

The Protein kinase domain occupies 155–467 (SFDDTPLGTA…ASSFLNMSRC (313 aa)). Residues 161–169 (LGTASLAQV) and K183 contribute to the ATP site. D315 serves as the catalytic Proton acceptor.

It belongs to the protein kinase superfamily. ADCK protein kinase family.

It localises to the mitochondrion. Appears to be essential for maintaining mitochondrial cristae formation and mitochondrial function by acting via YME1L1 in a kinase-independent manner to regulate essential mitochondrial structural proteins OPA1 and IMMT. The action of this enzyme is not yet clear. It is not known if it has protein kinase activity and what type of substrate it would phosphorylate (Ser, Thr or Tyr). This is AarF domain-containing protein kinase 1 from Homo sapiens (Human).